A 443-amino-acid polypeptide reads, in one-letter code: Probable nitrate/nitrite antiporter NarK1 (443 aa).

Helical transmembrane passes span 23–43 (TLAFTLMFAAWLMFGVLGVPI), 56–76 (WISALAILNGSLWRLLAGILA), 79–99 (YGGRLVFTLMLFFTAIPAYLV), 108–128 (LLLYAFLVGFAGNSFSVGIAW), 142–164 (LGVFGAGNVGASVTKFIGPALIA), 182–202 (FIPFLYAVLLVLMGFVLWFGT), 230–250 (FSLYYVVVFGAYVALSAWLPK), 255–275 (VFGLPLHEAALLTALFIFPAS), 298–318 (FGIILLASGVLMMPEGHIVLY), 329–349 (FTMGVELFTLLVFLIGVGMGI), 368–388 (AVGGLVGMLGALGGFFLPPLF), and 401–421 (TFFVLFLLAAISFLWMHLTVL).

The protein belongs to the major facilitator superfamily. Nitrate/nitrite porter (TC 2.A.1.8) family.

The protein resides in the cell membrane. It catalyses the reaction nitrate(in) + nitrite(out) = nitrate(out) + nitrite(in). Its function is as follows. Probable nitrate/nitrite antiporter that may be involved in nitrate import and nitrite export during anaerobic growth. This is Probable nitrate/nitrite antiporter NarK1 from Thermus thermophilus.